The chain runs to 65 residues: UPF0434 protein Mpe_A2486 (65 aa).

This sequence belongs to the UPF0434 family.

This is UPF0434 protein Mpe_A2486 from Methylibium petroleiphilum (strain ATCC BAA-1232 / LMG 22953 / PM1).